Reading from the N-terminus, the 399-residue chain is Phosphoglycerate kinase (399 aa).

Residues 22-24 (DFN), Arg38, 61-64 (HLGR), Arg119, and Arg152 contribute to the substrate site. Residues Lys205, Gly296, Glu327, and 353-356 (GGDT) each bind ATP.

It belongs to the phosphoglycerate kinase family. As to quaternary structure, monomer.

Its subcellular location is the cytoplasm. The catalysed reaction is (2R)-3-phosphoglycerate + ATP = (2R)-3-phospho-glyceroyl phosphate + ADP. It functions in the pathway carbohydrate degradation; glycolysis; pyruvate from D-glyceraldehyde 3-phosphate: step 2/5. This Nitratiruptor sp. (strain SB155-2) protein is Phosphoglycerate kinase.